We begin with the raw amino-acid sequence, 407 residues long: Phosphopentomutase (407 aa).

Mn(2+)-binding residues include D10, D306, H311, D347, H348, and H359.

It belongs to the phosphopentomutase family. Mn(2+) serves as cofactor.

It localises to the cytoplasm. It catalyses the reaction 2-deoxy-alpha-D-ribose 1-phosphate = 2-deoxy-D-ribose 5-phosphate. The enzyme catalyses alpha-D-ribose 1-phosphate = D-ribose 5-phosphate. It participates in carbohydrate degradation; 2-deoxy-D-ribose 1-phosphate degradation; D-glyceraldehyde 3-phosphate and acetaldehyde from 2-deoxy-alpha-D-ribose 1-phosphate: step 1/2. Isomerase that catalyzes the conversion of deoxy-ribose 1-phosphate (dRib-1-P) and ribose 1-phosphate (Rib-1-P) to deoxy-ribose 5-phosphate (dRib-5-P) and ribose 5-phosphate (Rib-5-P), respectively. The chain is Phosphopentomutase from Buchnera aphidicola subsp. Acyrthosiphon pisum (strain 5A).